Here is a 121-residue protein sequence, read N- to C-terminus: Small ribosomal subunit protein bS6 (121 aa).

The tract at residues 94–121 (KAETGPSAVMKRVEKEEARKSSQQETAA) is disordered. Residues 104 to 115 (KRVEKEEARKSS) are compositionally biased toward basic and acidic residues.

It belongs to the bacterial ribosomal protein bS6 family.

Its function is as follows. Binds together with bS18 to 16S ribosomal RNA. In Leptothrix cholodnii (strain ATCC 51168 / LMG 8142 / SP-6) (Leptothrix discophora (strain SP-6)), this protein is Small ribosomal subunit protein bS6.